The primary structure comprises 205 residues: High frequency lysogenization protein HflD homolog (205 aa).

It belongs to the HflD family.

It localises to the cytoplasm. It is found in the cell inner membrane. The protein is High frequency lysogenization protein HflD homolog of Vibrio parahaemolyticus serotype O3:K6 (strain RIMD 2210633).